Reading from the N-terminus, the 741-residue chain is T-box transcription factor TBX3 (741 aa).

Residues 107-220 constitute a DNA-binding region (T-box; first part); the sequence is LEAKELWDQF…NNISDKHGFT (114 aa). Residues 241–305 constitute a DNA-binding region (T-box; second part); sequence ILNSMHKYQP…NNPFAKGFRD (65 aa). Ser369 is subject to Phosphoserine. The interval 369-469 is disordered; the sequence is SEAESDAEAE…EGPVATKVDE (101 aa). Composition is skewed to basic and acidic residues over residues 377-386 and 420-437; these read AESKEEHGPE and SRARDTARLDKASPDSRH. Residues Ser432, Ser438, Ser456, Ser705, Ser736, Ser738, and Ser740 each carry the phosphoserine modification. The segment covering 438-447 has biased composition (polar residues); that stretch reads SPATISSSTR.

Interacts with PML. In adults, highest levels in lung. Also found in brain, heart, kidney, liver and ovary.

It is found in the nucleus. In terms of biological role, transcriptional repressor involved in developmental processes. Binds to the palindromic T site 5'-TTCACACCTAGGTGTGAA-3' DNA sequence, or a half-site, which are present in the regulatory region of several genes. Probably plays a role in limb pattern formation. Required for mammary placode induction, and maintenance of the mammary buds during development. Involved in branching morphogenesis in both developing lungs and adult mammary glands, via negative modulation of target genes; acting redundantly with TBX2. Required, together with TBX2, to maintain cell proliferation in the embryonic lung mesenchyme; perhaps acting downstream of SHH, BMP and TGFbeta signaling. Involved in modulating early inner ear development, acting independently of, and also redundantly with, TBX2 in different subregions of the developing ear. Acts as a negative regulator of PML function in cellular senescence. The polypeptide is T-box transcription factor TBX3 (Tbx3) (Mus musculus (Mouse)).